The chain runs to 218 residues: Adenylate kinase (218 aa).

Residue 10–15 (GAGKGT) coordinates ATP. The interval 30 to 59 (STGDMLRAAVKAGTPLGQQAKAVMESGGLV) is NMP. AMP contacts are provided by residues Thr-31, Arg-36, 57–59 (GLV), 85–88 (GFPR), and Gln-92. Positions 122–159 (GRRSHPASGRTYHVKFNPPKVEGKDDITGEDLIQRKDD) are LID. ATP is bound by residues Arg-123 and 132–133 (TY). Residues Arg-156 and Arg-167 each coordinate AMP. Gly-203 contacts ATP.

This sequence belongs to the adenylate kinase family. In terms of assembly, monomer.

The protein resides in the cytoplasm. It catalyses the reaction AMP + ATP = 2 ADP. It participates in purine metabolism; AMP biosynthesis via salvage pathway; AMP from ADP: step 1/1. In terms of biological role, catalyzes the reversible transfer of the terminal phosphate group between ATP and AMP. Plays an important role in cellular energy homeostasis and in adenine nucleotide metabolism. The polypeptide is Adenylate kinase (Variovorax paradoxus (strain S110)).